Consider the following 224-residue polypeptide: ATP-dependent Clp protease proteolytic subunit 1 (224 aa).

S120 (nucleophile) is an active-site residue. H145 is an active-site residue.

Belongs to the peptidase S14 family. Fourteen ClpP subunits assemble into 2 heptameric rings which stack back to back to give a disk-like structure with a central cavity, resembling the structure of eukaryotic proteasomes.

Its subcellular location is the cytoplasm. It carries out the reaction Hydrolysis of proteins to small peptides in the presence of ATP and magnesium. alpha-casein is the usual test substrate. In the absence of ATP, only oligopeptides shorter than five residues are hydrolyzed (such as succinyl-Leu-Tyr-|-NHMec, and Leu-Tyr-Leu-|-Tyr-Trp, in which cleavage of the -Tyr-|-Leu- and -Tyr-|-Trp bonds also occurs).. In terms of biological role, cleaves peptides in various proteins in a process that requires ATP hydrolysis. Has a chymotrypsin-like activity. Plays a major role in the degradation of misfolded proteins. The polypeptide is ATP-dependent Clp protease proteolytic subunit 1 (Prochlorococcus marinus (strain MIT 9313)).